Reading from the N-terminus, the 719-residue chain is Endonuclease MutS2 (719 aa).

Residue 273–280 (GPNTGGKT) coordinates ATP. The region spanning 644–719 (LDLRGYRYED…GFGVTVATLK (76 aa)) is the Smr domain.

It belongs to the DNA mismatch repair MutS family. MutS2 subfamily. Homodimer. Binds to stalled ribosomes, contacting rRNA.

Functionally, endonuclease that is involved in the suppression of homologous recombination and thus may have a key role in the control of bacterial genetic diversity. Its function is as follows. Acts as a ribosome collision sensor, splitting the ribosome into its 2 subunits. Detects stalled/collided 70S ribosomes which it binds and splits by an ATP-hydrolysis driven conformational change. Acts upstream of the ribosome quality control system (RQC), a ribosome-associated complex that mediates the extraction of incompletely synthesized nascent chains from stalled ribosomes and their subsequent degradation. Probably generates substrates for RQC. This Staphylococcus aureus protein is Endonuclease MutS2.